Here is a 203-residue protein sequence, read N- to C-terminus: MGANRLNITWHDRVLTKGDYLKRNGHQPLVLWFTGLSGSGKSTLAHAVEEELFRKGCYTYILDGDNIRHGLNSDLGFSEADRRENIRRIGEVAKLFVDAGIIVLAAFISPYREDRERVRALFEPAEFIEVFVNCDLAVCESRDPKGLYRKARSGELKQFTGIDSPYEVPFSPELVVNTACSTVKSGVQSVLAFVRDRGLINGD.

35–42 provides a ligand contact to ATP; the sequence is GLSGSGKS. Residue Ser-109 is the Phosphoserine intermediate of the active site.

The protein belongs to the APS kinase family.

It catalyses the reaction adenosine 5'-phosphosulfate + ATP = 3'-phosphoadenylyl sulfate + ADP + H(+). It functions in the pathway sulfur metabolism; hydrogen sulfide biosynthesis; sulfite from sulfate: step 2/3. Functionally, catalyzes the synthesis of activated sulfate. In Geotalea daltonii (strain DSM 22248 / JCM 15807 / FRC-32) (Geobacter daltonii), this protein is Adenylyl-sulfate kinase.